Consider the following 155-residue polypeptide: Ribosome-binding factor A (155 aa).

2 stretches are compositionally biased toward basic and acidic residues: residues 116–125 (ARQRDQEVAR) and 142–155 (SPHEGRPESEADGW). The tract at residues 116-155 (ARQRDQEVARQAEGATPAGDANPYKTSPHEGRPESEADGW) is disordered.

This sequence belongs to the RbfA family. In terms of assembly, monomer. Binds 30S ribosomal subunits, but not 50S ribosomal subunits or 70S ribosomes.

It localises to the cytoplasm. Functionally, one of several proteins that assist in the late maturation steps of the functional core of the 30S ribosomal subunit. Associates with free 30S ribosomal subunits (but not with 30S subunits that are part of 70S ribosomes or polysomes). Required for efficient processing of 16S rRNA. May interact with the 5'-terminal helix region of 16S rRNA. The polypeptide is Ribosome-binding factor A (Corynebacterium kroppenstedtii (strain DSM 44385 / JCM 11950 / CIP 105744 / CCUG 35717)).